Reading from the N-terminus, the 407-residue chain is Tyrosine--tRNA ligase (407 aa).

Position 36 (Tyr36) interacts with L-tyrosine. The 'HIGH' region signature appears at 41–50 (PTADSLHIGH). Tyr169 and Gln173 together coordinate L-tyrosine. The short motif at 229–233 (KMGKT) is the 'KMSKS' region element. Lys232 is a binding site for ATP. One can recognise an S4 RNA-binding domain in the interval 341-407 (KGILDILVET…KKSYNRIVIE (67 aa)).

The protein belongs to the class-I aminoacyl-tRNA synthetase family. TyrS type 1 subfamily. Homodimer.

The protein localises to the cytoplasm. The catalysed reaction is tRNA(Tyr) + L-tyrosine + ATP = L-tyrosyl-tRNA(Tyr) + AMP + diphosphate + H(+). Its function is as follows. Catalyzes the attachment of tyrosine to tRNA(Tyr) in a two-step reaction: tyrosine is first activated by ATP to form Tyr-AMP and then transferred to the acceptor end of tRNA(Tyr). The chain is Tyrosine--tRNA ligase from Clostridium tetani (strain Massachusetts / E88).